We begin with the raw amino-acid sequence, 397 residues long: Subtilisin-like serine protease Pen c 1 (397 aa).

Residues 1-19 (MGFLKVLATSLATLAVVDA) form the signal peptide. Positions 20–115 (GTLLTASNTD…IEPDMIVNAT (96 aa)) are cleaved as a propeptide — removed in mature form. One can recognise an Inhibitor I9 domain in the interval 35–113 (SYIVVMNDDV…KYIEPDMIVN (79 aa)). Positions 125 to 397 (SWGLARISSK…SKLLYNGINV (273 aa)) constitute a Peptidase S8 domain. Catalysis depends on charge relay system residues Asp157, His188, and Ser343.

Belongs to the peptidase S8 family.

The protein resides in the secreted. With respect to regulation, inhibited by 0.1 mM diisopropyl fluorophosphate (DFP), phenylmethanesulfonyl fluoride (PMSF), chymostatin and elastatinal. Not inhibited by N-alpha-p-tosyl-L-lysine chloromethylketone (TLCK), N-tosyl-L-phenylalanyl chloromethyl ketone (TPCK) or N-carbobenzoxy-L-phenylalanine chloromethylketone (ZPCK). Functionally, serine protease. Hydrolyzes azocasein. Cleaves peptide bonds of the oxidized insulin B chain preferably at 15-Leu-|-Tyr-16, but also at 4-Gln-|-His-5 and 24-Phe-|-Phe-25, and to a lesser extent at 5-His-|-Leu-6 and 25-Phe-|-Tyr-26. Hydrolyzes amide bonds between amino acids and 7-amino-4-methylcoumarin (AMC) in vitro. The sequence is that of Subtilisin-like serine protease Pen c 1 from Penicillium citrinum.